The chain runs to 126 residues: Small ribosomal subunit protein uS13 (126 aa).

Residues 92 to 126 (HRRGLPANGQRTHTNARTRKGPRKGMLQRRPAATK) are disordered. Positions 105–118 (TNARTRKGPRKGML) are enriched in basic residues.

Belongs to the universal ribosomal protein uS13 family. As to quaternary structure, part of the 30S ribosomal subunit. Forms a loose heterodimer with protein S19. Forms two bridges to the 50S subunit in the 70S ribosome.

Located at the top of the head of the 30S subunit, it contacts several helices of the 16S rRNA. In the 70S ribosome it contacts the 23S rRNA (bridge B1a) and protein L5 of the 50S subunit (bridge B1b), connecting the 2 subunits; these bridges are implicated in subunit movement. Contacts the tRNAs in the A and P-sites. This Sorangium cellulosum (strain So ce56) (Polyangium cellulosum (strain So ce56)) protein is Small ribosomal subunit protein uS13.